Consider the following 165-residue polypeptide: MSVKLNALTSDSYIDVSQYRDQHFKGNRYDQEKLLKQSHTLYVGNLSFYTTEEQVHELFSKSGDVKRIIIGLDKVKKTACGFCFVEYYTRAGAENAMRFINGTRLDDRIIRADWDAGFKEGRQYGRGKSGGQVRDEYRQDYDPARGGYGKLAQQHRPTEAIRNTF.

Residues Tyr19, Tyr42, Arg111–Asp115, Arg122–Arg126, and Gln132–Val133 contribute to the mRNA site. The RRM domain occupies His39–Gly117. The disordered stretch occupies residues Ala144–Phe165.

Belongs to the RRM NCBP2 family. In terms of assembly, component of the nuclear cap-binding complex (CBC), a heterodimer composed of ncbp1/cbp80 and ncbp2/cbp20 that interacts with m7GpppG-capped RNA.

The protein resides in the nucleus. Its subcellular location is the cytoplasm. Component of the cap-binding complex (CBC), which binds co-transcriptionally to the 5' cap of pre-mRNAs and is involved in various processes such as pre-mRNA splicing, translation regulation, nonsense-mediated mRNA decay, RNA-mediated gene silencing (RNAi) by microRNAs (miRNAs) and mRNA export. The CBC complex is involved in mRNA export from the nucleus, leading to the recruitment of the mRNA export machinery to the 5' end of mRNA and to mRNA export in a 5' to 3' direction through the nuclear pore. The CBC complex is also involved in mediating U snRNA and intronless mRNAs export from the nucleus. The CBC complex is essential for a pioneer round of mRNA translation, before steady state translation when the CBC complex is replaced by cytoplasmic cap-binding protein eIF4E. The pioneer round of mRNA translation mediated by the CBC complex plays a central role in nonsense-mediated mRNA decay (NMD), NMD only taking place in mRNAs bound to the CBC complex, but not on eIF4E-bound mRNAs. The CBC complex enhances NMD in mRNAs containing at least one exon-junction complex (EJC), promoting the interaction between upf1 and upf2. The CBC complex is also involved in 'failsafe' NMD, which is independent of the EJC complex, while it does not participate in Staufen-mediated mRNA decay (SMD). During cell proliferation, the CBC complex is also involved in microRNAs (miRNAs) biogenesis via its interaction with srrt/ars2, thereby being required for miRNA-mediated RNA interference. The CBC complex also acts as a negative regulator of parn, thereby acting as an inhibitor of mRNA deadenylation. In the CBC complex, ncbp2/cbp20 recognizes and binds capped RNAs (m7GpppG-capped RNA) but requires ncbp1/cbp80 to stabilize the movement of its N-terminal loop and lock the CBC into a high affinity cap-binding state with the cap structure. The conventional cap-binding complex with NCBP2 binds both small nuclear RNA (snRNA) and messenger (mRNA) and is involved in their export from the nucleus. The chain is Nuclear cap-binding protein subunit 2 (ncbp2) from Siniperca chuatsi (Mandarin fish).